The chain runs to 141 residues: Acetyltransferase YE1169 (141 aa).

The N-acetyltransferase domain occupies 1-141 (MEIRVFQQSD…GKRLIVDQEY (141 aa)).

Belongs to the acetyltransferase family. YpeA subfamily.

This Yersinia enterocolitica serotype O:8 / biotype 1B (strain NCTC 13174 / 8081) protein is Acetyltransferase YE1169.